The following is a 426-amino-acid chain: MASSRIVELATRISENTAIVDAYLRENQLPSPSFDEDGPVDFAIQGEEVKKAHEEAIALSWELHRLLLGPSHFLRPVPNGLSLQAISKHDIATKVPVHGKISYAALAQQCGLSEINTRRFVRYAIVHHRVFCEPQPGYVAHSAASRLLAEDPVMRDVLSHYLEECFPSFAMTLRAIDQFQDNGEPNQTGWNLYHETQDAPWDYYETHPAMARRFASTMAYETEREGRSSNVLVEGYAWTSLLAETTATTTSPLVVDVGGSRGKTALEIAHAHPELTLLVQDLPSMIEGARDQLPAIPARERVQFMAHDFFAPQLVPADAYILRHVFHNWSDRNAVRILRALVPSLQPGARLIVNDYIAPVPGVLSLAKEQRLREMDLIMLTLCNAYEREEQDWKRLFQEADPRFHVRTMSVPKGATEGILEVIWEG.

S-adenosyl-L-methionine-binding positions include 258 to 259 (GG), Asp-281, 308 to 309 (DF), and Arg-323. His-327 functions as the Proton acceptor in the catalytic mechanism.

It belongs to the class I-like SAM-binding methyltransferase superfamily. Cation-independent O-methyltransferase family.

It functions in the pathway secondary metabolite biosynthesis. Functionally, O-methyltransferase; part of the gene cluster that mediates the biosynthesis of pyranoviolin A, a pyranonigrin analog with a C-3 methoxy group. Initially, the PKS portion of pyvA synthesizes C-10 carbon chain from 5 molecules of malonyl-CoA, which is then condensed with the thiolation (T) domain-bound glycine activated by the adenylation (A) domain. The subsequent chain release by Dieckmann condensation (DKC) could be catalyzed by the TE domain present at the C-terminus of pyvA and/or the alpha/beta hydrolase pyvD, installing the tetramic acid moiety. The FAD-dependent monooxygenase pyvC next epoxidizes one of the olefins of the polyketide part, and the epoxide ring-opening induces the dihydro-gamma-pyrone ring formation. The cytochrome P450 monooxygeanse pyvB would be responsible for the 2 consecutive reactions, in which the dihydro-gamma-pyrone is oxidized to gamma-pyrone and C-7 is hydroxylated to yield pyranonigrin F. Finally, the O-methyltransferase pyvH methylates the C-3 hydroxy group to complete the biosynthesis. The chain is O-methyltransferase pyvH from Aspergillus violaceofuscus (strain CBS 115571).